The following is an 802-amino-acid chain: Phenylalanine--tRNA ligase beta subunit (802 aa).

Positions serine 38 to serine 148 constitute a tRNA-binding domain. The 76-residue stretch at valine 403–alanine 478 folds into the B5 domain. 3 residues coordinate Mg(2+): aspartate 456, aspartate 462, and aspartate 466. One can recognise an FDX-ACB domain in the interval serine 703–arginine 796.

Belongs to the phenylalanyl-tRNA synthetase beta subunit family. Type 1 subfamily. As to quaternary structure, tetramer of two alpha and two beta subunits. It depends on Mg(2+) as a cofactor.

Its subcellular location is the cytoplasm. It catalyses the reaction tRNA(Phe) + L-phenylalanine + ATP = L-phenylalanyl-tRNA(Phe) + AMP + diphosphate + H(+). This chain is Phenylalanine--tRNA ligase beta subunit, found in Buchnera aphidicola subsp. Baizongia pistaciae (strain Bp).